The primary structure comprises 3483 residues: Nonribosomal peptide synthetase Ao415 (3483 aa).

The segment at 281–669 (TFKKLNETSN…DVHPLIKDVV (389 aa)) is adenylation 1. The region spanning 775-851 (EVFDELSTKI…GLRDHVSGKK (77 aa)) is the Carrier 1 domain. Serine 812 carries the O-(pantetheine 4'-phosphoryl)serine modification. The tract at residues 886–1297 (ANVLPCSPMQ…YCLLHMLQNQ (412 aa)) is condensation 1. The adenylation 2 stretch occupies residues 1363 to 1758 (TYRQFDDMGN…SADKDVAEIV (396 aa)). The Carrier 2 domain maps to 1865–1941 (EELSETEKVI…SLAKALSSAN (77 aa)). Position 1901 is an O-(pantetheine 4'-phosphoryl)serine (serine 1901). The tract at residues 1981–2379 (IKPCTPLQEG…LLKNPEQEVA (399 aa)) is condensation 2. A Carrier 3 domain is found at 2412–2485 (TEAAVSIRRE…RMVVYLSSTK (74 aa)). O-(pantetheine 4'-phosphoryl)serine is present on serine 2446. The condensation 3 stretch occupies residues 2520-2917 (ESILPTTPLQ…MLQKIIGNPL (398 aa)). Residues 2954–3030 (DNYQNLERQV…KICLFLDKKQ (77 aa)) enclose the Carrier 4 domain. Residue serine 2991 is modified to O-(pantetheine 4'-phosphoryl)serine. The tract at residues 3084–3368 (SEGRIFLPTF…VQEDLLKIST (285 aa)) is condensation 4.

Belongs to the NRP synthetase family.

The protein operates within siderophore biosynthesis. Functionally, nonribosomal peptide synthetase; part of the gene cluster that mediates the biosynthesis of desferriferrichrome that chelates Fe(3+) to form ferrichrome. Fe(3+) is a key factor for induction of trap formation and the fungus uses the iron chelating desferriferrichrome to sequester Fe(3+) to inhibit trap formation and increase nematicidal activity. The biosynthesis of desferriferrichrome requires the action of the L-ornithine N(5)-oxygenase (LOO) Ao414 that hydroxylates L-ornithine at N(5), resulting in the formation of N(5)-hydroxyl-L-ornithine, which is subsequently N-acetylated to yield N(5)-acetyl-N(5)-hydroxy-L-ornithine (L-AHO). L-AHO harbors one hydroxamate moiety, which is the key core responsible for chelating iron. Then, L-AHO is further condensated with glycines to form desferriferrichrome through the NRPS protein Ao415. In Arthrobotrys oligospora (strain ATCC 24927 / CBS 115.81 / DSM 1491) (Nematode-trapping fungus), this protein is Nonribosomal peptide synthetase Ao415.